The sequence spans 712 residues: Nucleolin (712 aa).

The disordered stretch occupies residues Met1 to Pro305. N6-acetyllysine is present on residues Lys9, Lys15, and Lys16. Acidic residues predominate over residues Val24–Gly43. 4 positions are modified to phosphoserine: Ser28, Ser34, Ser41, and Ser42. A compositionally biased stretch (low complexity) spans Ala56 to Pro107. Residues Ala58–Val65 form repeat 1. The tract at residues Ala58–Lys135 is 8 X 8 AA tandem repeats of X-T-P-X-K-K-X-X. Ser67 is modified (phosphoserine). Phosphothreonine is present on residues Thr69, Thr76, Thr84, and Thr92. 3 consecutive repeat copies span residues Ala75–Ala82, Val83–Ala90, and Ala91–Val98. Lys96 bears the N6-acetyllysine mark. A Phosphothreonine modification is found at Thr99. One copy of the 5; truncated repeat lies at Thr99 to Val104. Lys102 is modified (N6-acetyllysine). Repeat unit 6 spans residues Thr105 to Ala112. At Thr106 the chain carries Phosphothreonine. Residue Lys109 is modified to N6-acetyllysine. At Thr113 the chain carries Phosphothreonine. At Lys116 the chain carries N6-acetyllysine. 2 tandem repeats follow at residues Ala120–Ala127 and Ala128–Lys135. Position 121 is a phosphothreonine (Thr121). Residues Pro122–Gly137 are compositionally biased toward low complexity. An N6-acetyllysine modification is found at Lys124. Phosphoserine occurs at positions 145 and 153. Over residues Ser145 to Glu171 the composition is skewed to acidic residues. Low complexity predominate over residues Pro172–Ala183. Ser184 and Ser206 each carry phosphoserine. A compositionally biased stretch (acidic residues) spans Ser184–Met211. A Phosphothreonine modification is found at Thr214. Acidic residues predominate over residues Glu234–Pro274. Residues Val275–Gly302 are compositionally biased toward basic and acidic residues. Residue Lys299 forms a Glycyl lysine isopeptide (Lys-Gly) (interchain with G-Cter in SUMO1); alternate linkage. Lys299 is covalently cross-linked (Glycyl lysine isopeptide (Lys-Gly) (interchain with G-Cter in SUMO2); alternate). Position 303 is a phosphothreonine (Thr303). RRM domains follow at residues Phe309–Gly385 and Arg395–Glu468. An N6-acetyllysine modification is found at Lys320. Lys326 is covalently cross-linked (Glycyl lysine isopeptide (Lys-Gly) (interchain with G-Cter in SUMO1); alternate). Lys326 participates in a covalent cross-link: Glycyl lysine isopeptide (Lys-Gly) (interchain with G-Cter in SUMO2); alternate. An N6-acetyllysine modification is found at Lys350. Ser358 is modified (phosphoserine). Thr369 carries the phosphothreonine modification. Residue Lys372 forms a Glycyl lysine isopeptide (Lys-Gly) (interchain with G-Cter in SUMO2) linkage. Residue Lys379 forms a Glycyl lysine isopeptide (Lys-Gly) (interchain with G-Cter in SUMO2); alternate linkage. Residue Lys379 is modified to N6-acetyllysine; alternate. Residues Lys400 and Lys405 each carry the N6-acetyllysine modification. Thr407 carries the phosphothreonine modification. N6-acetyllysine is present on residues Lys429 and Lys446. Phosphoserine is present on residues Ser460 and Ser462. N6-acetyllysine occurs at positions 469 and 479. The RRM 3 domain maps to Lys488–Pro562. Lys515 participates in a covalent cross-link: Glycyl lysine isopeptide (Lys-Gly) (interchain with G-Cter in SUMO2); alternate. An N6-acetyllysine; alternate modification is found at Lys515. Position 523 is an N6-acetyllysine (Lys523). Phosphoserine is present on Ser565. An N6-acetyllysine modification is found at Lys574. Residues Lys574 to Pro649 form the RRM 4 domain. Lys579 participates in a covalent cross-link: Glycyl lysine isopeptide (Lys-Gly) (interchain with G-Cter in SUMO2); alternate. An N6-acetyllysine; alternate modification is found at Lys579. Residue Ser582 is modified to Phosphoserine. Lys591 participates in a covalent cross-link: Glycyl lysine isopeptide (Lys-Gly) (interchain with G-Cter in SUMO1); alternate. Residue Lys591 forms a Glycyl lysine isopeptide (Lys-Gly) (interchain with G-Cter in SUMO2); alternate linkage. 2 positions are modified to phosphoserine: Ser593 and Ser621. Residue Lys626 forms a Glycyl lysine isopeptide (Lys-Gly) (interchain with G-Cter in SUMO2) linkage. The segment at Val642–Glu712 is disordered. Lys648 carries the N6-acetyllysine modification. The segment covering Glu652 to Gly698 has biased composition (gly residues). Asymmetric dimethylarginine is present on residues Arg658, Arg662, Arg668, Arg672, Arg675, Arg681, Arg683, Arg689, and Arg693. Position 696 is an asymmetric dimethylarginine; alternate (Arg696). Arg696 carries the omega-N-methylarginine; alternate modification. The span at Gly699 to Glu712 shows a compositional bias: basic and acidic residues.

As to quaternary structure, identified in a IGF2BP1-dependent mRNP granule complex containing untranslated mRNAs. Component of the SWAP complex that consists of NPM1, NCL/nucleolin, PARP1 and SWAP70. Component of a complex which is at least composed of HTATSF1/Tat-SF1, the P-TEFb complex components CDK9 and CCNT1, RNA polymerase II, SUPT5H, and NCL/nucleolin. Interacts with AICDA. Interacts with APTX. Interacts with C1QBP. Interacts with ERBB4. Interacts (via C-terminus) with FMR1 isoform 6 (via N-terminus). Interacts with GZF1; this interaction is important for nucleolar localization of GZF1. Interacts with NSUN2. Interacts with NVL. Interacts (via N-terminus domain) with SETX. Interacts (via RRM1 and C-terminal RRM4/Arg/Gly-rich domains) with TERT; the interaction is important for nucleolar localization of TERT. Interacts with WDR46. Interacts with ZFP36. Interacts with LRRC34. Interacts with RRP1B. Interacts with HNRNPU; this interaction occurs during mitosis. Interacts with RIOK1; RIOK1 recruits NCL to the PRMT5 for symmetrically methylation. Interacts with ZBTB7B. Interacts with MDK; this interaction promotes NCL clustering and lateral movements of this complex into lipid rafts leading to MDK internalization. Interacts with HDGF. Interacts with ALKBH2. Interacts with IGFBP5; this interaction is necessary for IGFBP5 localization to the nucleus. Interacts with DDX24 (when ubiquitinated); this interaction may be important during ribosome biogenesis. In terms of processing, some glutamate residues are glycylated by TTLL8. This modification occurs exclusively on glutamate residues and results in a glycine chain on the gamma-carboxyl group. Symmetrically methylated by PRMT5.

Its subcellular location is the nucleus. It localises to the nucleolus. It is found in the cytoplasm. Nucleolin is the major nucleolar protein of growing eukaryotic cells. It is found associated with intranucleolar chromatin and pre-ribosomal particles. It induces chromatin decondensation by binding to histone H1. It is thought to play a role in pre-rRNA transcription and ribosome assembly. May play a role in the process of transcriptional elongation. Binds RNA oligonucleotides with 5'-UUAGGG-3' repeats more tightly than the telomeric single-stranded DNA 5'-TTAGGG-3' repeats. The polypeptide is Nucleolin (NCL) (Pongo abelii (Sumatran orangutan)).